A 486-amino-acid polypeptide reads, in one-letter code: O-methyltransferase gedA (486 aa).

Residues 298 to 299 (GG), Asp-321, 353 to 354 (SF), and Arg-369 contribute to the S-adenosyl-L-methionine site. Catalysis depends on His-373, which acts as the Proton acceptor.

Belongs to the class I-like SAM-binding methyltransferase superfamily. Cation-independent O-methyltransferase family.

The catalysed reaction is emodin + S-adenosyl-L-methionine = questin + S-adenosyl-L-homocysteine + H(+). It functions in the pathway secondary metabolite biosynthesis. Its function is as follows. O-methyltransferase; part of the gene cluster that mediates the biosynthesis of geodin, an intermediate in the biosynthesis of other natural products. The pathway begins with the synthesis of atrochrysone thioester by the polyketide synthase (PKS) gedC. The atrochrysone carboxyl ACP thioesterase gedB then breaks the thioester bond and releases the atrochrysone carboxylic acid from gedC. The atrochrysone carboxylic acid is then converted to atrochrysone which is further transformed into emodinanthrone. The next step is performed by the emodinanthrone oxygenase gedH that catalyzes the oxidation of emodinanthrone to emodin. Emodin O-methyltransferase encoded probably by gedA then catalyzes methylation of the 8-hydroxy group of emodin to form questin. Ring cleavage of questin by questin oxidase gedK leads to desmethylsulochrin via several intermediates including questin epoxide. Another methylation step probably catalyzed by methyltransferase gedG leads to the formation of sulochrin which is further converted to dihydrogeodin by the sulochrin halogenase gedL. Finally, the dihydrogeodin oxidase gedJ catalyzes the stereospecific phenol oxidative coupling reaction converting dihydrogeodin to geodin. The sequence is that of O-methyltransferase gedA from Aspergillus terreus (strain NIH 2624 / FGSC A1156).